Consider the following 679-residue polypeptide: UvrABC system protein B (679 aa).

The Helicase ATP-binding domain maps to 25–176; the sequence is YGVNQGKQYQ…NVRESLRELV (152 aa). An ATP-binding site is contributed by 38 to 45; sequence GATGTGKT. Residues 91–114 carry the Beta-hairpin motif; it reads YYDYYQPEAYVPVSDTYIAKTSSV. Positions 429 to 591 constitute a Helicase C-terminal domain; sequence QIDDLLDEIR…IIPKPAGKKP (163 aa). The UVR domain occupies 639 to 674; the sequence is PEIIDKLEGKMNLAAEELDFEQAAKLRDRIRQLRKK.

It belongs to the UvrB family. In terms of assembly, forms a heterotetramer with UvrA during the search for lesions. Interacts with UvrC in an incision complex.

The protein resides in the cytoplasm. Its function is as follows. The UvrABC repair system catalyzes the recognition and processing of DNA lesions. A damage recognition complex composed of 2 UvrA and 2 UvrB subunits scans DNA for abnormalities. Upon binding of the UvrA(2)B(2) complex to a putative damaged site, the DNA wraps around one UvrB monomer. DNA wrap is dependent on ATP binding by UvrB and probably causes local melting of the DNA helix, facilitating insertion of UvrB beta-hairpin between the DNA strands. Then UvrB probes one DNA strand for the presence of a lesion. If a lesion is found the UvrA subunits dissociate and the UvrB-DNA preincision complex is formed. This complex is subsequently bound by UvrC and the second UvrB is released. If no lesion is found, the DNA wraps around the other UvrB subunit that will check the other stand for damage. The protein is UvrABC system protein B of Prochlorococcus marinus (strain MIT 9211).